Here is a 244-residue protein sequence, read N- to C-terminus: Thiol S-methyltransferase TMT1B (244 aa).

The N-terminal stretch at 1–23 (MDVLVPLLQLLVLLLTLPLHLLA) is a signal peptide.

The protein belongs to the methyltransferase superfamily. Highly expressed in liver and kidney. No expression in testis, heart, lung, brain, spleen or cultured fibroblasts.

The protein resides in the endoplasmic reticulum membrane. The protein localises to the lipid droplet. It localises to the microsome. It is found in the cytoplasm. Its subcellular location is the cytosol. The enzyme catalyses a thiol + S-adenosyl-L-methionine = a methyl thioether + S-adenosyl-L-homocysteine + H(+). In terms of biological role, thiol S-methyltransferase that catalyzes the transfer of a methyl group from S-adenosyl-L-methionine to alkyl and phenolic thiol-containing acceptor substrates. Together with TMT1B accounts for most of S-thiol methylation activity in the endoplasmic reticulum of hepatocytes. Selectively methylates S-centered nucleophiles from metabolites such as hydrogen sulfide and dithiothreitol. This is Thiol S-methyltransferase TMT1B (Tmt1b) from Rattus norvegicus (Rat).